Here is a 391-residue protein sequence, read N- to C-terminus: ATP-sensitive inward rectifier potassium channel 1 (391 aa).

The Cytoplasmic segment spans residues 1–77 (MGASERSVFR…IWTTVLDLKW (77 aa)). A Phosphoserine; by SGK1 modification is found at S44. Residues 78–102 (RYKMTVFITAFLGSWFLFGLLWYVV) traverse the membrane as a helical segment. Topologically, residues 103-127 (AYVHKDLPEFYPPDNRTPCVENING) are extracellular. The N-linked (GlcNAc...) asparagine glycan is linked to N117. The helical; Pore-forming intramembrane region spans 128-139 (MTSAFLFSLETQ). Positions 140–146 (VTIGYGF) form an intramembrane region, pore-forming. The Selectivity filter signature appears at 141–146 (TIGYGF). Residues 147–155 (RFVTEQCAT) lie on the Extracellular side of the membrane. A helical transmembrane segment spans residues 156–177 (AIFLLIFQSILGVIINSFMCGA). The Cytoplasmic segment spans residues 178 to 391 (ILAKISRPKK…EVDETDDTQM (214 aa)). Positions 180 to 207 (AKISRPKKRAKTITFSKNAVISKRGGKL) are polyphosphoinositide (PIP2)-binding. An ATP-binding site is contributed by 223–230 (GSHIYGKL).

This sequence belongs to the inward rectifier-type potassium channel (TC 1.A.2.1) family. KCNJ1 subfamily. In terms of assembly, interacts with SGK1 and SLC9A3R2/NHERF2. In terms of processing, phosphorylation at Ser-44 by SGK1 is necessary for its expression at the cell membrane. Mainly in kidney (renal cortex, medulla and papilla). As to expression, kidney.

The protein resides in the cell membrane. The catalysed reaction is K(+)(in) = K(+)(out). With respect to regulation, inhibited by WNK3. Activated by phosphatidylinositol 4,5 biphosphate (PtdIns(4,5)P2). Functionally, inward rectifier potassium channels are characterized by a greater tendency to allow potassium to flow into the cell rather than out of it. Their voltage dependence is regulated by the concentration of extracellular potassium; as external potassium is raised, the voltage range of the channel opening shifts to more positive voltages. The inward rectification is mainly due to the blockage of outward current by internal magnesium. This channel is activated by internal ATP and can be blocked by external barium. In the kidney, probably plays a major role in potassium homeostasis. Inward rectifier potassium channels are characterized by a greater tendency to allow potassium to flow into the cell rather than out of it. Their voltage dependence is regulated by the concentration of extracellular potassium; as external potassium is raised, the voltage range of the channel opening shifts to more positive voltages. This chain is ATP-sensitive inward rectifier potassium channel 1 (Kcnj1), found in Rattus norvegicus (Rat).